We begin with the raw amino-acid sequence, 422 residues long: Metallocarboxypeptidase A (422 aa).

Residues 1-17 (MRSVLSLALLAANVVTA) form the signal peptide. The propeptide at 18 to 112 (AVVSPFDYSG…FEAYSAGYAP (95 aa)) is activation peptide. One can recognise a Peptidase M14 domain in the interval 119 to 419 (SYHSYQDHIS…AGTVAMLKAV (301 aa)). 2 residues coordinate Zn(2+): histidine 179 and glutamate 182. Substrate is bound by residues 179–182 (HARE), arginine 237, and 254–255 (NR). Cysteine 248 and cysteine 271 are disulfide-bonded. A Zn(2+)-binding site is contributed by histidine 309. Residue 310–311 (SY) participates in substrate binding. Residue glutamate 385 is the Proton donor/acceptor of the active site.

Belongs to the peptidase M14 family. Requires Zn(2+) as cofactor.

The protein localises to the secreted. Functionally, extracellular metalloprotease that contributes to pathogenicity. The chain is Metallocarboxypeptidase A (MCPA) from Trichophyton equinum (Horse ringworm fungus).